Here is a 172-residue protein sequence, read N- to C-terminus: Centrin-2 (172 aa).

The segment covering methionine 1–alanine 14 has biased composition (polar residues). Residues methionine 1–glutamine 31 are disordered. Residue alanine 2 is modified to N-acetylalanine. Positions alanine 2–leucine 25 are required for self-assembly. Serine 20 carries the post-translational modification Phosphoserine. Residue lysine 22 forms a Glycyl lysine isopeptide (Lys-Gly) (interchain with G-Cter in SUMO2) linkage. The residue at position 26 (threonine 26) is a Phosphothreonine. EF-hand domains follow at residues aspartate 28–glutamate 63, proline 64–glutamate 99, aspartate 101–asparagine 136, and leucine 137–tyrosine 172. Ca(2+)-binding residues include aspartate 41, aspartate 43, threonine 45, threonine 47, and glutamate 52. Aspartate 150, aspartate 152, aspartate 154, glutamate 156, and glutamate 161 together coordinate Ca(2+).

This sequence belongs to the centrin family. Monomer. Homooligomer. Interacts with CCP110, SFI1. Component of the XPC complex composed of XPC, RAD23B and CETN2. Component of the nuclear pore complex (NPC)-associated TREX-2 complex (transcription and export complex 2), composed of at least GANP, 2 copies of ENY2, PCID2, SEM1/DSS1, and either centrin CETN2 or centrin CETN3. The TREX-2 complex also associates with ALYREF/ALY and with the nucleoporin NUP153. Interacts with USP49. Forms a microtubule-associated complex with POC5, POC1B and FAM161A. Interacts with CCDC15. In terms of tissue distribution, ubiquitously expressed in all adult tissues tested, with strongest expression in brain, spleen, kidney, small intestine and ovary. Also expressed in the NIH 3T3 fibroblast cell line and peripheral blood lymphocytes.

The protein localises to the cytoplasm. It localises to the cytoskeleton. The protein resides in the microtubule organizing center. Its subcellular location is the centrosome. It is found in the centriole. The protein localises to the nucleus. It localises to the nucleus envelope. The protein resides in the nuclear pore complex. Plays a fundamental role in microtubule organizing center structure and function. Required for centriole duplication and correct spindle formation. Has a role in regulating cytokinesis and genome stability via cooperation with CALM1 and CCP110. Its function is as follows. Involved in global genome nucleotide excision repair (GG-NER) by acting as component of the XPC complex. Cooperatively with Rad23b appears to stabilize Xpc. In vitro, stimulates DNA binding of the Xpc:Rad23b dimer. Functionally, the XPC complex is proposed to represent the first factor bound at the sites of DNA damage and together with other core recognition factors, Xpa, RPA and the TFIIH complex, is part of the pre-incision (or initial recognition) complex. The XPC complex recognizes a wide spectrum of damaged DNA characterized by distortions of the DNA helix such as single-stranded loops, mismatched bubbles or single-stranded overhangs. The orientation of XPC complex binding appears to be crucial for inducing a productive NER. XPC complex is proposed to recognize and to interact with unpaired bases on the undamaged DNA strand which is followed by recruitment of the TFIIH complex and subsequent scanning for lesions in the opposite strand in a 5'-to-3' direction by the NER machinery. Cyclobutane pyrimidine dimers (CPDs) which are formed upon UV-induced DNA damage esacpe detection by the XPC complex due to a low degree of structural perurbation. Instead they are detected by the UV-DDB complex which in turn recruits and cooperates with the XPC complex in the respective DNA repair. In terms of biological role, as a component of the TREX-2 complex, involved in the export of mRNAs to the cytoplasm through the nuclear pores. In Mus musculus (Mouse), this protein is Centrin-2 (Cetn2).